The following is a 325-amino-acid chain: Undecaprenyl-phosphate 4-deoxy-4-formamido-L-arabinose transferase (325 aa).

A run of 2 helical transmembrane segments spans residues 235-255 (LSVV…LLMV) and 269-291 (VFTL…GLLG).

This sequence belongs to the glycosyltransferase 2 family.

The protein localises to the cell inner membrane. The enzyme catalyses UDP-4-deoxy-4-formamido-beta-L-arabinose + di-trans,octa-cis-undecaprenyl phosphate = 4-deoxy-4-formamido-alpha-L-arabinopyranosyl di-trans,octa-cis-undecaprenyl phosphate + UDP. It participates in glycolipid biosynthesis; 4-amino-4-deoxy-alpha-L-arabinose undecaprenyl phosphate biosynthesis; 4-amino-4-deoxy-alpha-L-arabinose undecaprenyl phosphate from UDP-4-deoxy-4-formamido-beta-L-arabinose and undecaprenyl phosphate: step 1/2. It functions in the pathway bacterial outer membrane biogenesis; lipopolysaccharide biosynthesis. Catalyzes the transfer of 4-deoxy-4-formamido-L-arabinose from UDP to undecaprenyl phosphate. The modified arabinose is attached to lipid A and is required for resistance to polymyxin and cationic antimicrobial peptides. Essential for virulence in insects. The polypeptide is Undecaprenyl-phosphate 4-deoxy-4-formamido-L-arabinose transferase (Photorhabdus laumondii subsp. laumondii (strain DSM 15139 / CIP 105565 / TT01) (Photorhabdus luminescens subsp. laumondii)).